A 298-amino-acid chain; its full sequence is Protein ABIL1 (298 aa).

Belongs to the ABI family. As to quaternary structure, binds SCAR2. In terms of tissue distribution, expressed in seedlings, roots, hypocotyls, cotyledons, leaves, stems, and flowers.

The protein resides in the cytoplasm. It localises to the cytoskeleton. Its function is as follows. Involved in regulation of actin and microtubule organization. Part of a WAVE complex that activates the Arp2/3 complex. This Arabidopsis thaliana (Mouse-ear cress) protein is Protein ABIL1 (ABIL1).